Here is a 353-residue protein sequence, read N- to C-terminus: JmjC domain-containing protein E (353 aa).

The JmjC domain maps to 138-348; sequence YYIQYQNNSL…ETTKYQKQIK (211 aa).

The sequence is that of JmjC domain-containing protein E (jcdE) from Dictyostelium discoideum (Social amoeba).